The following is a 195-amino-acid chain: Proteasome subunit beta 1 (195 aa).

A propeptide spans 1-6 (removed in mature form; by autocatalysis); the sequence is MEELPA. The Nucleophile role is filled by threonine 7.

It belongs to the peptidase T1B family. As to quaternary structure, the 20S proteasome core is composed of 14 alpha and 14 beta subunits that assemble into four stacked heptameric rings, resulting in a barrel-shaped structure. The two inner rings, each composed of seven catalytic beta subunits, are sandwiched by two outer rings, each composed of seven alpha subunits. The catalytic chamber with the active sites is on the inside of the barrel. Has a gated structure, the ends of the cylinder being occluded by the N-termini of the alpha-subunits. Is capped at one or both ends by the proteasome regulatory ATPase, PAN.

It is found in the cytoplasm. The enzyme catalyses Cleavage of peptide bonds with very broad specificity.. The formation of the proteasomal ATPase PAN-20S proteasome complex, via the docking of the C-termini of PAN into the intersubunit pockets in the alpha-rings, triggers opening of the gate for substrate entry. Interconversion between the open-gate and close-gate conformations leads to a dynamic regulation of the 20S proteasome proteolysis activity. Component of the proteasome core, a large protease complex with broad specificity involved in protein degradation. In Sulfolobus acidocaldarius (strain ATCC 33909 / DSM 639 / JCM 8929 / NBRC 15157 / NCIMB 11770), this protein is Proteasome subunit beta 1.